The following is a 214-amino-acid chain: Thymidylate kinase (214 aa).

7–14 contributes to the ATP binding site; sequence GIDGAGKS.

This sequence belongs to the thymidylate kinase family.

It carries out the reaction dTMP + ATP = dTDP + ADP. In terms of biological role, phosphorylation of dTMP to form dTDP in both de novo and salvage pathways of dTTP synthesis. The chain is Thymidylate kinase from Chlorobium luteolum (strain DSM 273 / BCRC 81028 / 2530) (Pelodictyon luteolum).